A 72-amino-acid chain; its full sequence is Alpha-conotoxin SII (72 aa).

The signal sequence occupies residues 1 to 21 (MGMRMMFTVFLLVVLATTVVS). A propeptide spanning residues 22 to 50 (FPSDRASDGRDDEAKDERSDMHESDRNGR) is cleaved from the precursor. Residues 23–51 (PSDRASDGRDDEAKDERSDMHESDRNGRG) are disordered. A compositionally biased stretch (basic and acidic residues) spans 26 to 49 (RASDGRDDEAKDERSDMHESDRNG). 3 cysteine pairs are disulfide-bonded: C52-C68, C53-C58, and C54-C64. Positions 70-72 (RTL) are excised as a propeptide.

It belongs to the conotoxin A superfamily. Post-translationally, the disulfide bond Cys-52-Cys-68 (Cys I-VI), which corresponds to an extra disulfide bond when compared to the cysteine framework I (CC-C-C), does contribute to conotoxin SII stability and imparts a unique binding mode at the nAChR. Expressed by the venom duct.

It is found in the secreted. In terms of biological role, alpha-conotoxins act on postsynaptic membranes, they bind to the nicotinic acetylcholine receptors (nAChR) and thus inhibit them. This toxin potently inhibits the rodent muscle nAChR (IC(50)=120 nM (adult subtype, alpha-1-beta-1-delta-epsilon/CHRNA1-CHRNB1-CHRND-CHRNE) and IC(50)=370 nM (fetal subtype, alpha-1-beta-1-gamma-delta/CHRNA1-CHRNB1-CHRNG-CHRND)) and weakly inhibits neuronal nAChRs. In contrast to alpha-conotoxins bearing 2 disulfide bonds (framework I), this conotoxin acts via a unique binding mode with the helix and the N- and C-termini buried in the binding pocket of muscle nAChRs. The protein is Alpha-conotoxin SII of Conus striatus (Striated cone).